Consider the following 471-residue polypeptide: UDP-N-acetylmuramate--L-alanine ligase (471 aa).

112-118 (GTHGKTT) lines the ATP pocket.

Belongs to the MurCDEF family.

It localises to the cytoplasm. The enzyme catalyses UDP-N-acetyl-alpha-D-muramate + L-alanine + ATP = UDP-N-acetyl-alpha-D-muramoyl-L-alanine + ADP + phosphate + H(+). It functions in the pathway cell wall biogenesis; peptidoglycan biosynthesis. Cell wall formation. In Cupriavidus metallidurans (strain ATCC 43123 / DSM 2839 / NBRC 102507 / CH34) (Ralstonia metallidurans), this protein is UDP-N-acetylmuramate--L-alanine ligase.